The sequence spans 1484 residues: Chromatin remodeling regulator CECR2 (1484 aa).

Residues 170-241 are disordered; sequence VQGKSNGELS…RHGSQGPGQG (72 aa). Basic residues predominate over residues 197–209; it reads TGKRRGRPPKRKK. Residues 210-222 show a composition bias toward basic and acidic residues; sequence LQEEILLSEKQEE. Polar residues predominate over residues 223–234; sequence NSLASEPQTRHG. At Ser422 the chain carries Phosphoserine. Residues 434–538 form the Bromo domain; the sequence is FELDDDFTAM…RCFHRAMMKH (105 aa). The residue at position 546 (Thr546) is a Phosphothreonine. Disordered regions lie at residues 556–704, 796–825, 919–1053, 1165–1259, 1287–1320, and 1442–1484; these read EKRE…GPRL, GNHG…PRTL, GVPY…SYPG, VMGG…LFSD, AKVP…LDLD, and YRPS…LDQS. Ser571 bears the Phosphoserine mark. Over residues 605-614 the composition is skewed to low complexity; sequence SSGDDQSSSS. Ser1014 bears the Phosphoserine mark. Arg1197 and Arg1203 each carry asymmetric dimethylarginine. Residues 1243-1254 are compositionally biased toward pro residues; it reads SGPPASQPPPPR. Basic and acidic residues predominate over residues 1304-1320; the sequence is DESMERPESPKEFLDLD. Phosphoserine is present on Ser1312. The segment covering 1451 to 1469 has biased composition (polar residues); the sequence is PVQSQASFPKTPTAATSQE. Residues 1474-1484 are compositionally biased toward pro residues; that stretch reads HKPPTLPLDQS.

In terms of assembly, component of the CERF-1 ISWI chromatin remodeling complex (also called the CECR2-containing remodeling factor (CERF) complex) at least composed of CECR2 and SMARCA1. Component of the CERF-5 ISWI chromatin remodeling complex at least composed of SMARCA5/SNF2H and CECR2. LUZP1 is detected as part of the CERF-1 and CERF-5 complexes in embryonic stem (ES) cells where it is involved in complex stabilization but is not detected in the complexes in the testis. Interacts with CCAR2; CCAR2 may form part of the CERF-1 and/or CEF-5 ISWI chromatin remodeling complexes in ES cells. Interacts with acetylated lysine residues on histone H2A and H3 (in vitro). Interacts with LRPPRC. As to expression, highly expressed in skeletal muscle, thymus, placenta and lung. Expressed at lower level in brain, heart, colon, spleen, kidney.

The protein localises to the nucleus. Regulatory subunit of the ATP-dependent CERF-1 and CERF-5 ISWI chromatin remodeling complexes, which form ordered nucleosome arrays on chromatin and facilitate access to DNA during DNA-templated processes such as DNA replication, transcription, and repair. The complexes do not have the ability to slide mononucleosomes to the center of a DNA template. The CERF-1 ISWI chromatin remodeling complex has a lower ATP hydrolysis rate than the CERF-5 ISWI chromatin remodeling complex. Plays a role in various processes during development: required during embryogenesis for neural tube closure and inner ear development. In adults, required for spermatogenesis, via the formation of ISWI-type chromatin complexes. In histone-modifying complexes, CECR2 recognizes and binds acylated histones: binds histones that are acetylated and/or butyrylated. May also be involved through its interaction with LRPPRC in the integration of cytoskeletal network with vesicular trafficking, nucleocytosolic shuttling, transcription, chromosome remodeling and cytokinesis. The protein is Chromatin remodeling regulator CECR2 (CECR2) of Homo sapiens (Human).